The sequence spans 253 residues: 5'-nucleotidase SurE (253 aa).

Residues Asp8, Asp9, Ser40, and Asn93 each coordinate a divalent metal cation.

This sequence belongs to the SurE nucleotidase family. A divalent metal cation is required as a cofactor.

It is found in the cytoplasm. It carries out the reaction a ribonucleoside 5'-phosphate + H2O = a ribonucleoside + phosphate. Nucleotidase that shows phosphatase activity on nucleoside 5'-monophosphates. This Methylobacterium sp. (strain 4-46) protein is 5'-nucleotidase SurE.